The chain runs to 683 residues: Elongation factor G-like protein (683 aa).

A tr-type G domain is found at 5–267; that stretch reads QNVRSAALIG…YLGDIGVSPE (263 aa). Residues 14–21, 73–77, and 127–130 each bind GTP; these read GHNGSGKS, DTPGF, and NQMD.

This sequence belongs to the TRAFAC class translation factor GTPase superfamily. Classic translation factor GTPase family. EF-G/EF-2 subfamily.

This is Elongation factor G-like protein from Thermotoga maritima (strain ATCC 43589 / DSM 3109 / JCM 10099 / NBRC 100826 / MSB8).